Consider the following 263-residue polypeptide: Transcription factor bHLH27 (263 aa).

Residues 32-47 (EAFSGSGESSSPDGAA) are compositionally biased toward low complexity. Positions 32-61 (EAFSGSGESSSPDGAATSPASSKNVVSERN) are disordered. Residues 49–58 (SPASSKNVVS) are compositionally biased toward polar residues. One can recognise a bHLH domain in the interval 50–99 (PASSKNVVSERNRRQKLNQRLFALRSVVPNISKLDKASVIKDSIDYMQEL).

In terms of assembly, homodimer. In terms of tissue distribution, expressed constitutively in roots, leaves, stems, and flowers.

Its subcellular location is the nucleus. This Arabidopsis thaliana (Mouse-ear cress) protein is Transcription factor bHLH27 (BHLH27).